The primary structure comprises 122 residues: Large ribosomal subunit protein bL12 (122 aa).

It belongs to the bacterial ribosomal protein bL12 family. As to quaternary structure, homodimer. Part of the ribosomal stalk of the 50S ribosomal subunit. Forms a multimeric L10(L12)X complex, where L10 forms an elongated spine to which 2 to 4 L12 dimers bind in a sequential fashion. Binds GTP-bound translation factors.

Functionally, forms part of the ribosomal stalk which helps the ribosome interact with GTP-bound translation factors. Is thus essential for accurate translation. In Flavobacterium psychrophilum (strain ATCC 49511 / DSM 21280 / CIP 103535 / JIP02/86), this protein is Large ribosomal subunit protein bL12.